The following is a 179-amino-acid chain: ATP-dependent protease subunit HslV (179 aa).

T7 is an active-site residue. Na(+) is bound by residues G162, C165, and T168.

The protein belongs to the peptidase T1B family. HslV subfamily. A double ring-shaped homohexamer of HslV is capped on each side by a ring-shaped HslU homohexamer. The assembly of the HslU/HslV complex is dependent on binding of ATP.

The protein localises to the cytoplasm. It catalyses the reaction ATP-dependent cleavage of peptide bonds with broad specificity.. Allosterically activated by HslU binding. Protease subunit of a proteasome-like degradation complex believed to be a general protein degrading machinery. This is ATP-dependent protease subunit HslV from Teredinibacter turnerae (strain ATCC 39867 / T7901).